The primary structure comprises 382 residues: Lactosylceramide 1,3-N-acetyl-beta-D-glucosaminyltransferase B (382 aa).

Over 1–13 the chain is Cytoplasmic; it reads MAVLKMPRFKKYH. The chain crosses the membrane as a helical; Signal-anchor for type II membrane protein span at residues 14–30; the sequence is LRLMITCFSTLLLMTYW. Over 31–382 the chain is Lumenal; the sequence is EKIDNCVVTH…CKAAFFEEDT (352 aa). Residues N57, N112, N167, and N276 are each glycosylated (N-linked (GlcNAc...) asparagine).

Belongs to the glycosyltransferase 31 family.

The protein localises to the golgi apparatus membrane. The enzyme catalyses a beta-D-Gal-(1-&gt;4)-beta-D-Glc-(1&lt;-&gt;1)-Cer(d18:1(4E)) + UDP-N-acetyl-alpha-D-glucosamine = a beta-D-GlcNAc-(1-&gt;3)-beta-D-Gal-(1-&gt;4)-beta-D-Glc-(1&lt;-&gt;1)-Cer(d18:1(4E)) + UDP + H(+). The catalysed reaction is a neolactoside nLc4Cer(d18:1(4E)) + UDP-N-acetyl-alpha-D-glucosamine = a neolactoside IV(3)-beta-GlcNAc-nLc4Cer(d18:1(4E)) + UDP + H(+). Its pathway is protein modification; protein glycosylation. Its function is as follows. Beta-1,3-N-acetylglucosaminyltransferase that plays a key role in the synthesis of lacto- or neolacto-series carbohydrate chains on glycolipids. This chain is Lactosylceramide 1,3-N-acetyl-beta-D-glucosaminyltransferase B (b3gnt5b), found in Danio rerio (Zebrafish).